The primary structure comprises 364 residues: Sec-independent protein translocase protein TatC (364 aa).

7 consecutive transmembrane segments (helical) span residues 42–62, 107–127, 139–159, 160–180, 194–214, 225–245, and 246–266; these read IALLAFAIAGVVCFIFEPRIF, MIAAVVVSSPVWLYQLWSFIT, LTFVGVSLVLFATGAVFAYLT, LSTGLGLLLGFGGNGLVSVLD, IFGLSFEVPLLVMMLNLAGIV, PEIFLVFVFAAVVTPSQDPFT, and MLALGLPMVLLYEVALIIGWL. The interval 277-364 is disordered; sequence TSPYADLDDD…STDVTHGDIT (88 aa). Residues 282–295 show a composition bias toward acidic residues; the sequence is DLDDDETSPLDFDD. The span at 301 to 320 shows a compositional bias: low complexity; sequence AASAGPAATATSPGTANPPG. Over residues 324–344 the composition is skewed to polar residues; sequence PPGTANPVGTANPVGTGSSTP.

The protein belongs to the TatC family. In terms of assembly, the Tat system comprises two distinct complexes: a TatABC complex, containing multiple copies of TatA, TatB and TatC subunits, and a separate TatA complex, containing only TatA subunits. Substrates initially bind to the TatABC complex, which probably triggers association of the separate TatA complex to form the active translocon.

It localises to the cell membrane. Its function is as follows. Part of the twin-arginine translocation (Tat) system that transports large folded proteins containing a characteristic twin-arginine motif in their signal peptide across membranes. Together with TatB, TatC is part of a receptor directly interacting with Tat signal peptides. The polypeptide is Sec-independent protein translocase protein TatC (Frankia casuarinae (strain DSM 45818 / CECT 9043 / HFP020203 / CcI3)).